Here is a 356-residue protein sequence, read N- to C-terminus: Peptide chain release factor 1 (356 aa).

Gln233 is subject to N5-methylglutamine.

The protein belongs to the prokaryotic/mitochondrial release factor family. In terms of processing, methylated by PrmC. Methylation increases the termination efficiency of RF1.

The protein localises to the cytoplasm. Functionally, peptide chain release factor 1 directs the termination of translation in response to the peptide chain termination codons UAG and UAA. The protein is Peptide chain release factor 1 of Bacillus licheniformis (strain ATCC 14580 / DSM 13 / JCM 2505 / CCUG 7422 / NBRC 12200 / NCIMB 9375 / NCTC 10341 / NRRL NRS-1264 / Gibson 46).